Reading from the N-terminus, the 524-residue chain is Probable plastidic glucose transporter 1 (524 aa).

The next 12 helical transmembrane spans lie at 88–108 (MANFLFGYHIGVMNGPIVSIA), 122–142 (LVVSIFIAGAFIGSIVAGPLV), 151–171 (FQIFTIPLILGALVSAQAHSL), 179–199 (FLVGLGIGVNTVLVPIYISEV), 208–228 (LGTLCQIGTCLGIIFSLLLGI), 239–259 (TMLYVASMPGFLLALGMQFAV), 320–340 (VAFIGGSLFVLQQFAGINGVL), 357–377 (QASLYVGVTNFAGALCASYLI), 386–406 (LIGSYLGMAVSMFLIVYAVGF), 420–440 (GTLMYIFSFAIGAGPVTGLII), 452–472 (IMGFSFSVHWVSNFLVGLFFL), and 483–503 (VYASFGSVSLLAAAFSHLFTV).

It belongs to the major facilitator superfamily. Sugar transporter (TC 2.A.1.1) family.

The protein localises to the plastid. It localises to the chloroplast membrane. Its function is as follows. May be involved in the efflux of glucose towards the cytosol. This chain is Probable plastidic glucose transporter 1, found in Arabidopsis thaliana (Mouse-ear cress).